Consider the following 595-residue polypeptide: UvrABC system protein C (595 aa).

The GIY-YIG domain occupies 14-91; the sequence is SNPGCYLHKD…IQENMPKFNI (78 aa). Positions 196–231 constitute a UVR domain; sequence DKIVNQLKAKMKDMSDQMEFERAAEYRDLIEAVSTL.

The protein belongs to the UvrC family. In terms of assembly, interacts with UvrB in an incision complex.

The protein localises to the cytoplasm. Functionally, the UvrABC repair system catalyzes the recognition and processing of DNA lesions. UvrC both incises the 5' and 3' sides of the lesion. The N-terminal half is responsible for the 3' incision and the C-terminal half is responsible for the 5' incision. The polypeptide is UvrABC system protein C (Streptococcus thermophilus (strain CNRZ 1066)).